The chain runs to 297 residues: Homoserine kinase (297 aa).

82–92 (PLTRGLGSSAS) contacts ATP.

It belongs to the GHMP kinase family. Homoserine kinase subfamily.

It is found in the cytoplasm. It carries out the reaction L-homoserine + ATP = O-phospho-L-homoserine + ADP + H(+). It participates in amino-acid biosynthesis; L-threonine biosynthesis; L-threonine from L-aspartate: step 4/5. In terms of biological role, catalyzes the ATP-dependent phosphorylation of L-homoserine to L-homoserine phosphate. The chain is Homoserine kinase from Bacillus cereus (strain ATCC 14579 / DSM 31 / CCUG 7414 / JCM 2152 / NBRC 15305 / NCIMB 9373 / NCTC 2599 / NRRL B-3711).